We begin with the raw amino-acid sequence, 240 residues long: Aldehyde dehydrogenase, cytosolic 2 (240 aa).

Residues glutamate 8 and cysteine 42 contribute to the active site. An N6-acetyllysine mark is found at lysine 106, lysine 149, lysine 151, and lysine 174.

Belongs to the aldehyde dehydrogenase family. In terms of assembly, homotetramer. As to expression, non-lens specific, predominant form expressed in the liver.

Its subcellular location is the cytoplasm. It catalyses the reaction an aldehyde + NAD(+) + H2O = a carboxylate + NADH + 2 H(+). The protein operates within alcohol metabolism; ethanol degradation; acetate from ethanol: step 2/2. Elephant shrews, in contrast to other mammals, possess both a lens- and a non-lens specific class-1 aldehyde dehydrogenase. Can convert/oxidize retinaldehyde to retinoic acid. The sequence is that of Aldehyde dehydrogenase, cytosolic 2 from Macroscelides proboscideus (Short-eared elephant shrew).